We begin with the raw amino-acid sequence, 421 residues long: Chitin deacetylase (421 aa).

The N-terminal stretch at 1 to 21 is a signal peptide; it reads MQIKTFALSAAIAQVATLALA. N-linked (GlcNAc...) asparagine glycans are attached at residues Asn-39, Asn-70, Asn-87, and Asn-106. The region spanning 157 to 349 is the NodB homology domain; it reads ETWGLTYDDG…YKQVIDVATC (193 aa). The active-site Proton acceptor is the Asp-164. Residue Asp-164 coordinates acetate. Asp-165 serves as a coordination point for Co(2+). N-linked (GlcNAc...) asparagine glycosylation occurs at Asn-168. Co(2+) is bound by residues His-214 and His-218. Position 255 (Tyr-255) interacts with acetate. The N-linked (GlcNAc...) asparagine glycan is linked to Asn-307. His-320 acts as the Proton donor in catalysis. N-linked (GlcNAc...) asparagine glycosylation is found at Asn-323, Asn-351, and Asn-367. The GPI-anchor amidated threonine moiety is linked to residue Thr-390. The propeptide at 391–421 is removed in mature form; it reads AAAHIQASTSGAMSVLPNLALISAFIATLLF.

Belongs to the polysaccharide deacetylase family. Co(2+) is required as a cofactor.

It is found in the secreted. It localises to the cell wall. Its subcellular location is the cell membrane. It catalyses the reaction [(1-&gt;4)-N-acetyl-beta-D-glucosaminyl](n) + n H2O = chitosan + n acetate. In terms of biological role, hydrolyzes the N-acetamido groups of N-acetyl-D-glucosamine residues in chitin to form chitosan and acetate. The sequence is that of Chitin deacetylase from Amylomyces rouxii (Filamentous fungus).